The sequence spans 135 residues: Large ribosomal subunit protein uL16 (135 aa).

Belongs to the universal ribosomal protein uL16 family. Part of the 50S ribosomal subunit.

In terms of biological role, binds 23S rRNA and is also seen to make contacts with the A and possibly P site tRNAs. The sequence is that of Large ribosomal subunit protein uL16 from Bdellovibrio bacteriovorus (strain ATCC 15356 / DSM 50701 / NCIMB 9529 / HD100).